The chain runs to 360 residues: Photosystem II protein D1 3 (360 aa).

The next 3 helical transmembrane spans lie at 29-46, 118-133, and 142-156; these read YVGW…TATI, HFLL…QWEL, and WICV…AAFA. Histidine 118 is a binding site for chlorophyll a. Residue tyrosine 126 coordinates pheophytin a. 2 residues coordinate [CaMn4O5] cluster: aspartate 170 and glutamate 189. The helical transmembrane segment at 197-218 threads the bilayer; it reads FHMLGVAGVFGGSLFSAMHGSL. Histidine 198 serves as a coordination point for chlorophyll a. A quinone is bound by residues histidine 215 and 264-265; that span reads SF. Histidine 215 is a binding site for Fe cation. Residue histidine 272 coordinates Fe cation. Residues 274–288 traverse the membrane as a helical segment; that stretch reads FLGAWPVVGIWFTSM. Residues histidine 332, glutamate 333, aspartate 342, and alanine 344 each contribute to the [CaMn4O5] cluster site. Positions 345 to 360 are excised as a propeptide; the sequence is AGEATPVALTAPSIHG.

The protein belongs to the reaction center PufL/M/PsbA/D family. In terms of assembly, PSII is composed of 1 copy each of membrane proteins PsbA, PsbB, PsbC, PsbD, PsbE, PsbF, PsbH, PsbI, PsbJ, PsbK, PsbL, PsbM, PsbT, PsbX, PsbY, PsbZ, Psb30/Ycf12, peripheral proteins PsbO, CyanoQ (PsbQ), PsbU, PsbV and a large number of cofactors. It forms dimeric complexes. The cofactor is The D1/D2 heterodimer binds P680, chlorophylls that are the primary electron donor of PSII, and subsequent electron acceptors. It shares a non-heme iron and each subunit binds pheophytin, quinone, additional chlorophylls, carotenoids and lipids. D1 provides most of the ligands for the Mn4-Ca-O5 cluster of the oxygen-evolving complex (OEC). There is also a Cl(-1) ion associated with D1 and D2, which is required for oxygen evolution. The PSII complex binds additional chlorophylls, carotenoids and specific lipids.. In terms of processing, tyr-161 forms a radical intermediate that is referred to as redox-active TyrZ, YZ or Y-Z. C-terminally processed by CtpA; processing is essential to allow assembly of the oxygen-evolving complex and thus photosynthetic growth.

It is found in the cellular thylakoid membrane. The catalysed reaction is 2 a plastoquinone + 4 hnu + 2 H2O = 2 a plastoquinol + O2. Photosystem II (PSII) is a light-driven water:plastoquinone oxidoreductase that uses light energy to abstract electrons from H(2)O, generating O(2) and a proton gradient subsequently used for ATP formation. It consists of a core antenna complex that captures photons, and an electron transfer chain that converts photonic excitation into a charge separation. The D1/D2 (PsbA/PsbD) reaction center heterodimer binds P680, the primary electron donor of PSII as well as several subsequent electron acceptors. This Synechococcus sp. (strain ATCC 27144 / PCC 6301 / SAUG 1402/1) (Anacystis nidulans) protein is Photosystem II protein D1 3.